The sequence spans 260 residues: MSHHWGYGKHNGPEHWHKDFPIAKGERQSPVDIDTHTAKYDPSLKPLSVSYDQATSLRILNNGHAFNVEFDDSQDKAVLKGGPLDGTYRLIQFHFHWGSLDGQGSEHTVDKKKYAAELHLVHWNTKYGDFGKAVQQPDGLAVLGIFLKVGSAKPGLQKVVDVLDSIKTKGKSADFTNFDPRGLLPESLDYWTYPGSLTTPPLLECVTWIVLKEPISVSSEQVLKFRKLNFNGEGEPEELMVDNWRPAQPLKNRQIKASFK.

At serine 2 the chain carries N-acetylserine. Serine 2 is modified (phosphoserine). The Alpha-carbonic anhydrase domain occupies 3 to 259 (HHWGYGKHNG…LKNRQIKASF (257 aa)). Histidine 64 serves as the catalytic Proton donor/acceptor. Positions 94, 96, and 119 each coordinate Zn(2+). A phosphoserine mark is found at serine 165 and serine 172. Position 198–199 (198–199 (TT)) interacts with substrate.

This sequence belongs to the alpha-carbonic anhydrase family. In terms of assembly, interacts with SLC4A4. Interaction with SLC4A7 regulates SLC4A7 transporter activity. Interacts with SLC26A6 isoform 4 (via C-terminus cytoplasmic domain). Requires Zn(2+) as cofactor. It depends on Co(2+) as a cofactor.

Its subcellular location is the cytoplasm. It is found in the cell membrane. The catalysed reaction is hydrogencarbonate + H(+) = CO2 + H2O. It catalyses the reaction urea = cyanamide + H2O. Activated by X-ray, histamine, L-adrenaline, L- and D-phenylalanine, L- and D-histidine, L-His-OMe and beta-Ala-His (carnosine). Competitively inhibited by saccharin, thioxolone, coumarins, 667-coumate, celecoxib (Celebrex), valdecoxib (Bextra), SC-125, SC-560, diclofenac, acetate, azide, bromide, sulfonamide derivatives such as acetazolamide (AZA), methazolamide (MZA), ethoxzolamide (EZA), dichlorophenamide (DCP), brinzolamide, dansylamide, thiabendazole-5-sulfonamide, trifluoromethane sulfonamide and N-hydroxysulfamide, fructose-based sugar sulfamate RWJ-37497, and Foscarnet (phosphonoformate trisodium salt). Repressed strongly by hydrogen sulfide(HS) and weakly by nitrate (NO(3)). Esterase activity weakly reduced by cyanamide. N-hydroxyurea interferes with zinc binding and inhibit activity. Catalyzes the reversible hydration of carbon dioxide. Can also hydrate cyanamide to urea. Stimulates the chloride-bicarbonate exchange activity of SLC26A6. Essential for bone resorption and osteoclast differentiation. Involved in the regulation of fluid secretion into the anterior chamber of the eye. Contributes to intracellular pH regulation in the duodenal upper villous epithelium during proton-coupled peptide absorption. This chain is Carbonic anhydrase 2 (CA2), found in Homo sapiens (Human).